The primary structure comprises 177 residues: Isopentenyl-diphosphate Delta-isomerase (177 aa).

Mn(2+) contacts are provided by His22 and His28. The Nudix hydrolase domain occupies 26 to 160; that stretch reads LRHKAISVFV…PERFTPWLRI (135 aa). Cys62 is an active-site residue. Residue His64 coordinates Mn(2+). Residue Glu82 participates in Mg(2+) binding. The Mn(2+) site is built by Glu108 and Glu110. Glu110 is an active-site residue.

The protein belongs to the IPP isomerase type 1 family. The cofactor is Mg(2+). It depends on Mn(2+) as a cofactor.

It localises to the cytoplasm. It catalyses the reaction isopentenyl diphosphate = dimethylallyl diphosphate. It participates in isoprenoid biosynthesis; dimethylallyl diphosphate biosynthesis; dimethylallyl diphosphate from isopentenyl diphosphate: step 1/1. Its pathway is porphyrin-containing compound metabolism; chlorophyll biosynthesis. In terms of biological role, catalyzes the 1,3-allylic rearrangement of the homoallylic substrate isopentenyl (IPP) to its highly electrophilic allylic isomer, dimethylallyl diphosphate (DMAPP). This Cereibacter sphaeroides (strain ATCC 17025 / ATH 2.4.3) (Rhodobacter sphaeroides) protein is Isopentenyl-diphosphate Delta-isomerase.